A 320-amino-acid chain; its full sequence is Esterase LipI (320 aa).

Active-site residues include Ser165, Asp261, and His291.

This sequence belongs to the 'GDXG' lipolytic enzyme family.

The catalysed reaction is a fatty acid ester + H2O = an aliphatic alcohol + a fatty acid + H(+). It carries out the reaction a butanoate ester + H2O = an aliphatic alcohol + butanoate + H(+). It catalyses the reaction an octanoate ester + H2O = an aliphatic alcohol + octanoate + H(+). The enzyme catalyses decanoate ester + H2O = decanoate + an aliphatic alcohol + H(+). The catalysed reaction is an acetyl ester + H2O = an aliphatic alcohol + acetate + H(+). It carries out the reaction a dodecanoate ester + H2O = an aliphatic alcohol + dodecanoate + H(+). Inhibited by ionic detergents SDS (anions) and CTAB (cationic). Strongly inhibited by Zn(2+). In terms of biological role, esterase that can hydrolyze short-chain esters with the carbon chain containing 2 to 12 carbon atoms. In vitro, pNP-butyrate is the preferred substrate. This is Esterase LipI from Mycobacterium tuberculosis (strain ATCC 25618 / H37Rv).